The primary structure comprises 161 residues: Allophycocyanin beta chain (161 aa).

N71 is subject to N4-methylasparagine. C81 is a (2R,3E)-phycocyanobilin binding site.

This sequence belongs to the phycobiliprotein family. As to quaternary structure, heterodimer of an alpha and a beta chain. Post-translationally, contains one covalently linked phycocyanobilin chromophore.

The protein resides in the plastid. It localises to the chloroplast thylakoid membrane. In terms of biological role, light-harvesting photosynthetic bile pigment-protein from the phycobiliprotein complex. Allophycocyanin has a maximum absorption at approximately 650 nanometers. The polypeptide is Allophycocyanin beta chain (apcB) (Pyropia haitanensis (Red seaweed)).